The chain runs to 692 residues: Elongation factor G (692 aa).

Positions 8–282 (ERTRNIGIMA…AIVYYLPSPV (275 aa)) constitute a tr-type G domain. Residues 17–24 (AHIDAGKT), 81–85 (DTPGH), and 135–138 (NKMD) each bind GTP.

This sequence belongs to the TRAFAC class translation factor GTPase superfamily. Classic translation factor GTPase family. EF-G/EF-2 subfamily.

The protein resides in the cytoplasm. Catalyzes the GTP-dependent ribosomal translocation step during translation elongation. During this step, the ribosome changes from the pre-translocational (PRE) to the post-translocational (POST) state as the newly formed A-site-bound peptidyl-tRNA and P-site-bound deacylated tRNA move to the P and E sites, respectively. Catalyzes the coordinated movement of the two tRNA molecules, the mRNA and conformational changes in the ribosome. The polypeptide is Elongation factor G (Carboxydothermus hydrogenoformans (strain ATCC BAA-161 / DSM 6008 / Z-2901)).